The primary structure comprises 198 residues: MDSLSQSSRLECQICFNYFSQRRLPKLLHCQHTCCSVCLSQMRLSQREIRCPWCRCVTQIPIGLSVSHLPDDPEVLSVISVSQSSEHTPIFIHLPNNGCYLLPVSLDTDGTPLPGQPTCHVGPKSIGVFDVSDGQNHVLGHDGLGDGMEEEEVVVVKTTAWTGVCTVLLVAFILIFLLGIVLHNMSCVSKRFTIISCG.

An RING-type zinc finger spans residues 12–55 (CQICFNYFSQRRLPKLLHCQHTCCSVCLSQMRLSQREIRCPWCR). The chain crosses the membrane as a helical span at residues 162-182 (TGVCTVLLVAFILIFLLGIVL).

It belongs to the RNF152 family.

Its subcellular location is the lysosome membrane. The catalysed reaction is S-ubiquitinyl-[E2 ubiquitin-conjugating enzyme]-L-cysteine + [acceptor protein]-L-lysine = [E2 ubiquitin-conjugating enzyme]-L-cysteine + N(6)-ubiquitinyl-[acceptor protein]-L-lysine.. It functions in the pathway protein modification; protein ubiquitination. Functionally, E3 ubiquitin-protein ligase that acts as a negative regulator of mTORC1 signaling by mediating ubiquitination of RagA/RRAGA and RHEB. Catalyzes 'Lys-63'-linked polyubiquitination of RagA/RRAGA in response to amino acid starvation, thereby regulating mTORC1 signaling. Also mediates monoubiquitination of RHEB, promoting its association with the TSC-TBC complex and subsequent inhibition. Also mediates 'Lys-48'-linked polyubiquitination of target proteins and their subsequent targeting to the proteasome for degradation. The polypeptide is E3 ubiquitin-protein ligase rnf152 (Danio rerio (Zebrafish)).